The chain runs to 82 residues: Large ribosomal subunit protein bL27 (82 aa).

The interval 1 to 20 (MATKKAGGSSSNGRDSIGKR) is disordered.

Belongs to the bacterial ribosomal protein bL27 family.

This chain is Large ribosomal subunit protein bL27, found in Neorickettsia sennetsu (strain ATCC VR-367 / Miyayama) (Ehrlichia sennetsu).